Reading from the N-terminus, the 2164-residue chain is Genome polyprotein (2164 aa).

A lipid anchor (N-myristoyl glycine; by host) is attached at G2. The Cytoplasmic portion of the chain corresponds to 2–1477; it reads GAQVSRQNVG…DLGIANMTIG (1476 aa). The interval 208-239 is disordered; the sequence is NVSVGYNHTHPGEQGREVVPSRTSSDNKRPSD. Positions 572 to 588 are amphipathic alpha-helix; it reads LTQNPVENYIDSVLNEV. Residues H884 and D901 each act as for protease 2A activity in the active site. The Zn(2+) site is built by C918 and C920. The active-site For protease 2A activity is C972. Zn(2+) is bound by residues C978 and H980. Positions 1104–1173 are membrane-binding; sequence SDSWLKKFTE…TIRLAPASVQ (70 aa). The tract at residues 1104–1237 is oligomerization; sequence SDSWLKKFTE…SPGTGKSLAT (134 aa). Positions 1125-1129 are RNA-binding; that stretch reads GQKIS. One can recognise an SF3 helicase domain in the interval 1197 to 1357; the sequence is EARRIKNLYI…KEYLLDGKLD (161 aa). An ATP-binding site is contributed by 1227 to 1234; it reads GSPGTGKS. Zn(2+) contacts are provided by C1365, C1376, and C1381. The C4-type; degenerate zinc finger occupies 1365-1381; that stretch reads CDVNIKIGNAKCCPFIC. The tract at residues 1408-1415 is RNA-binding; it reads EDRRRSSA. An oligomerization region spans residues 1419 to 1424; that stretch reads MEAIFQ. Residues 1478 to 1493 lie within the membrane without spanning it; sequence IIANVVSIVGVIYIIY. Over 1494–2164 the chain is Cytoplasmic; sequence KLFCTLQGPY…VLEHEWYEKF (671 aa). Position 1503 is an O-(5'-phospho-RNA)-tyrosine (Y1503). Residues 1522–1700 enclose the Peptidase C3 domain; the sequence is GPEEEFGRSL…FSAMLLKSYF (179 aa). Catalysis depends on for protease 3C activity residues H1561, E1592, and C1668. Residues 1932 to 2045 form the RdRp catalytic domain; that stretch reads ECLMAFDYSN…SYNFKLDMAV (114 aa). Positions 1938 and 2031 each coordinate Mg(2+).

This sequence belongs to the picornaviruses polyprotein family. Interacts with capsid protein VP1 and capsid protein VP3 to form heterotrimeric protomers. In terms of assembly, interacts with capsid protein VP0, and capsid protein VP3 to form heterotrimeric protomers. Five protomers subsequently associate to form pentamers which serve as building blocks for the capsid. Interacts with capsid protein VP2, capsid protein VP3 and capsid protein VP4 following cleavage of capsid protein VP0. As to quaternary structure, interacts with capsid protein VP1 and capsid protein VP3 in the mature capsid. Interacts with capsid protein VP0 and capsid protein VP1 to form heterotrimeric protomers. Five protomers subsequently associate to form pentamers which serve as building blocks for the capsid. Interacts with capsid protein VP4 in the mature capsid. Interacts with protein 2C; this interaction may be important for virion morphogenesis. In terms of assembly, interacts with capsid protein VP1 and capsid protein VP3. As to quaternary structure, homodimer. Homohexamer; forms a hexameric ring structure with 6-fold symmetry characteristic of AAA+ ATPases. Interacts (via N-terminus) with host RTN3 (via reticulon domain); this interaction is important for viral replication. Interacts with capsid protein VP3; this interaction may be important for virion morphogenesis. In terms of assembly, interacts with protein 3CD. As to quaternary structure, homodimer. Interacts with host GBF1. Interacts (via GOLD domain) with host ACBD3 (via GOLD domain); this interaction allows the formation of a viral protein 3A/ACBD3 heterotetramer with a 2:2 stoichiometry, which will stimulate the recruitment of host PI4KB in order to synthesize PI4P at the viral RNA replication sites. Interacts with RNA-directed RNA polymerase. In terms of assembly, interacts with protein 3AB and with RNA-directed RNA polymerase. As to quaternary structure, interacts with Viral protein genome-linked and with protein 3CD. It depends on Mg(2+) as a cofactor. In terms of processing, specific enzymatic cleavages in vivo by the viral proteases yield processing intermediates and the mature proteins. Myristoylation is required for the formation of pentamers during virus assembly. Further assembly of 12 pentamers and a molecule of genomic RNA generates the provirion. Post-translationally, during virion maturation, immature virions are rendered infectious following cleavage of VP0 into VP4 and VP2. This maturation seems to be an autocatalytic event triggered by the presence of RNA in the capsid and it is followed by a conformational change infectious virion. In terms of processing, myristoylation is required during RNA encapsidation and formation of the mature virus particle. VPg is uridylylated by the polymerase into VPg-pUpU. This acts as a nucleotide-peptide primer for the genomic RNA replication.

Its subcellular location is the virion. It is found in the host cytoplasm. It localises to the host cytoplasmic vesicle membrane. The protein resides in the host nucleus. The catalysed reaction is a ribonucleoside 5'-triphosphate + H2O = a ribonucleoside 5'-diphosphate + phosphate + H(+). It carries out the reaction Selective cleavage of Tyr-|-Gly bond in the picornavirus polyprotein.. The enzyme catalyses RNA(n) + a ribonucleoside 5'-triphosphate = RNA(n+1) + diphosphate. It catalyses the reaction Selective cleavage of Gln-|-Gly bond in the poliovirus polyprotein. In other picornavirus reactions Glu may be substituted for Gln, and Ser or Thr for Gly.. Replication or transcription is subject to high level of random mutations by the nucleotide analog ribavirin. Its function is as follows. Forms an icosahedral capsid of pseudo T=3 symmetry with capsid proteins VP2 and VP3. The capsid is 300 Angstroms in diameter, composed of 60 copies of each capsid protein and enclosing the viral positive strand RNA genome. Capsid protein VP1 mainly forms the vertices of the capsid. Capsid protein VP1 interacts with host cell receptor to provide virion attachment to target host cells. This attachment induces virion internalization. Tyrosine kinases are probably involved in the entry process. After binding to its receptor, the capsid undergoes conformational changes. Capsid protein VP1 N-terminus (that contains an amphipathic alpha-helix) and capsid protein VP4 are externalized. Together, they shape a pore in the host membrane through which viral genome is translocated to host cell cytoplasm. Forms an icosahedral capsid of pseudo T=3 symmetry with capsid proteins VP2 and VP3. The capsid is 300 Angstroms in diameter, composed of 60 copies of each capsid protein and enclosing the viral positive strand RNA genome. In terms of biological role, lies on the inner surface of the capsid shell. After binding to the host receptor, the capsid undergoes conformational changes. Capsid protein VP4 is released, Capsid protein VP1 N-terminus is externalized, and together, they shape a pore in the host membrane through which the viral genome is translocated into the host cell cytoplasm. Functionally, component of immature procapsids, which is cleaved into capsid proteins VP4 and VP2 after maturation. Allows the capsid to remain inactive before the maturation step. Its function is as follows. Cysteine protease that cleaves viral polyprotein and specific host proteins. It is responsible for the autocatalytic cleavage between the P1 and P2 regions, which is the first cleavage occurring in the polyprotein. Also cleaves the host translation initiation factor EIF4G1, in order to shut down the capped cellular mRNA translation. Inhibits the host nucleus-cytoplasm protein and RNA trafficking by cleaving host members of the nuclear pores. Counteracts stress granule formation probably by antagonizing its assembly or promoting its dissassembly. Plays an essential role in the virus replication cycle by acting as a viroporin. Creates a pore in the host endoplasmic reticulum and as a consequence releases Ca2+ in the cytoplasm of infected cell. In turn, high levels of cytoplasmic calcium may trigger membrane trafficking and transport of viral ER-associated proteins to viroplasms, sites of viral genome replication. In terms of biological role, induces and associates with structural rearrangements of intracellular membranes. Displays RNA-binding, nucleotide binding and NTPase activities. May play a role in virion morphogenesis and viral RNA encapsidation by interacting with the capsid protein VP3. Functionally, localizes the viral replication complex to the surface of membranous vesicles. Together with protein 3CD binds the Cis-Active RNA Element (CRE) which is involved in RNA synthesis initiation. Acts as a cofactor to stimulate the activity of 3D polymerase, maybe through a nucleid acid chaperone activity. Its function is as follows. Localizes the viral replication complex to the surface of membranous vesicles. It inhibits host cell endoplasmic reticulum-to-Golgi apparatus transport and causes the disassembly of the Golgi complex, possibly through GBF1 interaction. This would result in depletion of MHC, trail receptors and IFN receptors at the host cell surface. Plays an essential role in viral RNA replication by recruiting ACBD3 and PI4KB at the viral replication sites, thereby allowing the formation of the rearranged membranous structures where viral replication takes place. Acts as a primer for viral RNA replication and remains covalently bound to viral genomic RNA. VPg is uridylylated prior to priming replication into VPg-pUpU. The oriI viral genomic sequence may act as a template for this. The VPg-pUpU is then used as primer on the genomic RNA poly(A) by the RNA-dependent RNA polymerase to replicate the viral genome. During genome replication, the VPg-RNA linkage is removed by the host TDP2, thereby accelerating replication. During the late stage of the replication cycle, host TDP2 is excluded from sites of viral RNA synthesis and encapsidation, allowing for the generation of progeny virions. In terms of biological role, involved in the viral replication complex and viral polypeptide maturation. It exhibits protease activity with a specificity and catalytic efficiency that is different from protease 3C. Protein 3CD lacks polymerase activity. Protein 3CD binds to the 5'UTR of the viral genome. Functionally, replicates the viral genomic RNA on the surface of intracellular membranes. May form linear arrays of subunits that propagate along a strong head-to-tail interaction called interface-I. Covalently attaches UMP to a tyrosine of VPg, which is used to prime RNA synthesis. The positive stranded RNA genome is first replicated at virus induced membranous vesicles, creating a dsRNA genomic replication form. This dsRNA is then used as template to synthesize positive stranded RNA genomes. ss(+)RNA genomes are either translated, replicated or encapsidated. Its function is as follows. Major viral protease that mediates proteolytic processing of the polyprotein. Cleaves host EIF5B, contributing to host translation shutoff. Also cleaves host PABPC1, contributing to host translation shutoff. Cleaves host NLRP1, triggers host N-glycine-mediated degradation of the autoinhibitory NLRP1 N-terminal fragment. This Human rhinovirus A serotype 89 (strain 41467-Gallo) (HRV-89) protein is Genome polyprotein.